A 250-amino-acid polypeptide reads, in one-letter code: tRNA (guanine-N(1)-)-methyltransferase (250 aa).

S-adenosyl-L-methionine-binding positions include Gly-116 and 136 to 141 (IGDYVL).

It belongs to the RNA methyltransferase TrmD family. As to quaternary structure, homodimer.

It is found in the cytoplasm. The catalysed reaction is guanosine(37) in tRNA + S-adenosyl-L-methionine = N(1)-methylguanosine(37) in tRNA + S-adenosyl-L-homocysteine + H(+). In terms of biological role, specifically methylates guanosine-37 in various tRNAs. The sequence is that of tRNA (guanine-N(1)-)-methyltransferase from Pseudomonas syringae pv. tomato (strain ATCC BAA-871 / DC3000).